A 558-amino-acid chain; its full sequence is Energy-dependent translational throttle protein EttA (558 aa).

ABC transporter domains follow at residues Tyr6–Gly256 and Val322–His552. Residue Gly38–Ser45 participates in ATP binding. The tract at residues Gly94–Asp136 is arm. Residues Gly239–Val320 are ptIM. An ATP-binding site is contributed by Gly354–Thr361.

The protein belongs to the ABC transporter superfamily. ABCF family. Translational throttle EttA subfamily. In terms of assembly, monomer. Probably contacts ribosomal proteins L1, L5, L33 and S7, the 16S and 23S rRNA and the P-site containing tRNA(fMet).

It localises to the cytoplasm. It catalyses the reaction ATP + H2O = ADP + phosphate + H(+). Its function is as follows. A translation factor that gates the progression of the 70S ribosomal initiation complex (IC, containing tRNA(fMet) in the P-site) into the translation elongation cycle by using a mechanism sensitive to the ATP/ADP ratio. Binds to the 70S ribosome E-site where it modulates the state of the translating ribosome during subunit translocation. ATP hydrolysis probably frees it from the ribosome, which can enter the elongation phase. This is Energy-dependent translational throttle protein EttA from Mycobacterium tuberculosis (strain CDC 1551 / Oshkosh).